We begin with the raw amino-acid sequence, 305 residues long: Porphobilinogen deaminase (305 aa).

Cys241 is modified (S-(dipyrrolylmethanemethyl)cysteine).

This sequence belongs to the HMBS family. As to quaternary structure, monomer. The cofactor is dipyrromethane.

The catalysed reaction is 4 porphobilinogen + H2O = hydroxymethylbilane + 4 NH4(+). Its pathway is porphyrin-containing compound metabolism; protoporphyrin-IX biosynthesis; coproporphyrinogen-III from 5-aminolevulinate: step 2/4. Tetrapolymerization of the monopyrrole PBG into the hydroxymethylbilane pre-uroporphyrinogen in several discrete steps. The protein is Porphobilinogen deaminase of Exiguobacterium sp. (strain ATCC BAA-1283 / AT1b).